We begin with the raw amino-acid sequence, 254 residues long: 5-oxoprolinase subunit A (254 aa).

It belongs to the LamB/PxpA family. Forms a complex composed of PxpA, PxpB and PxpC.

It carries out the reaction 5-oxo-L-proline + ATP + 2 H2O = L-glutamate + ADP + phosphate + H(+). In terms of biological role, catalyzes the cleavage of 5-oxoproline to form L-glutamate coupled to the hydrolysis of ATP to ADP and inorganic phosphate. The protein is 5-oxoprolinase subunit A of Acinetobacter baylyi (strain ATCC 33305 / BD413 / ADP1).